The primary structure comprises 74 residues: Putative sulfur carrier protein NMA0882 (74 aa).

Cysteine 13 acts as the Cysteine persulfide intermediate in catalysis.

It belongs to the sulfur carrier protein TusA family.

The sequence is that of Putative sulfur carrier protein NMA0882 from Neisseria meningitidis serogroup A / serotype 4A (strain DSM 15465 / Z2491).